The chain runs to 65 residues: Large ribosomal subunit protein uL29 (65 aa).

Belongs to the universal ribosomal protein uL29 family.

The chain is Large ribosomal subunit protein uL29 from Delftia acidovorans (strain DSM 14801 / SPH-1).